The primary structure comprises 329 residues: Calponin-3 (329 aa).

An N6-acetyllysine modification is found at Lys-23. In terms of domain architecture, Calponin-homology (CH) spans 26–130 (HQAEEDLRNW…TLVALAGLAK (105 aa)). N6-methyllysine is present on Lys-158. Calponin-like repeat units follow at residues 164–189 (IGLQMGTNKCASQAGMTAYGTRRHLY), 204–229 (ISLQMGTNKGASQAGMLAPGTRRDIY), and 243–268 (ISLQMGTNKVASQKGMSVYGLGRQVY). A disordered region spans residues 279-329 (PVIHNGSQGTGTNGSEISDSDYQAEYPDEYHGEYQDDYPRDYQYSDQGIDY). Residues 306-318 (DEYHGEYQDDYPR) show a composition bias toward basic and acidic residues. Ser-323 bears the Phosphoserine mark.

Belongs to the calponin family. In terms of tissue distribution, expressed in both non-smooth muscle tissues as well as smooth muscle tissues.

Its function is as follows. Thin filament-associated protein that is implicated in the regulation and modulation of smooth muscle contraction. It is capable of binding to actin, calmodulin and tropomyosin. The interaction of calponin with actin inhibits the actomyosin Mg-ATPase activity. The polypeptide is Calponin-3 (CNN3) (Homo sapiens (Human)).